The primary structure comprises 582 residues: Aspartate--tRNA ligase (582 aa).

The aspartate stretch occupies residues 198–201; the sequence is QIFK. R220 lines the L-aspartate pocket. ATP-binding positions include 220–222 and Q229; that span reads RDE. H445 contributes to the L-aspartate binding site. E479 serves as a coordination point for ATP. An L-aspartate-binding site is contributed by R486. 531–534 is an ATP binding site; that stretch reads GFDR.

The protein belongs to the class-II aminoacyl-tRNA synthetase family. Type 1 subfamily. In terms of assembly, homodimer.

Its subcellular location is the cytoplasm. It carries out the reaction tRNA(Asp) + L-aspartate + ATP = L-aspartyl-tRNA(Asp) + AMP + diphosphate. In terms of biological role, catalyzes the attachment of L-aspartate to tRNA(Asp) in a two-step reaction: L-aspartate is first activated by ATP to form Asp-AMP and then transferred to the acceptor end of tRNA(Asp). The polypeptide is Aspartate--tRNA ligase (Amoebophilus asiaticus (strain 5a2)).